The following is a 264-amino-acid chain: Diphthine synthase (264 aa).

Residues Leu10, Asp87, Val90, 115–116 (SI), Leu166, Ala209, and His234 contribute to the S-adenosyl-L-methionine site.

It belongs to the diphthine synthase family. As to quaternary structure, homodimer.

The catalysed reaction is 2-[(3S)-amino-3-carboxypropyl]-L-histidyl-[translation elongation factor 2] + 3 S-adenosyl-L-methionine = diphthine-[translation elongation factor 2] + 3 S-adenosyl-L-homocysteine + 3 H(+). The protein operates within protein modification; peptidyl-diphthamide biosynthesis. In terms of biological role, S-adenosyl-L-methionine-dependent methyltransferase that catalyzes the trimethylation of the amino group of the modified target histidine residue in translation elongation factor 2 (EF-2), to form an intermediate called diphthine. The three successive methylation reactions represent the second step of diphthamide biosynthesis. The sequence is that of Diphthine synthase from Thermococcus kodakarensis (strain ATCC BAA-918 / JCM 12380 / KOD1) (Pyrococcus kodakaraensis (strain KOD1)).